The sequence spans 1415 residues: DNA-directed RNA polymerase subunit beta' (1415 aa).

Cys72, Cys74, Cys87, and Cys90 together coordinate Zn(2+). The Mg(2+) site is built by Asp463, Asp465, and Asp467. Zn(2+)-binding residues include Cys812, Cys886, Cys893, and Cys896.

It belongs to the RNA polymerase beta' chain family. In terms of assembly, the RNAP catalytic core consists of 2 alpha, 1 beta, 1 beta' and 1 omega subunit. When a sigma factor is associated with the core the holoenzyme is formed, which can initiate transcription. Mg(2+) is required as a cofactor. It depends on Zn(2+) as a cofactor.

It catalyses the reaction RNA(n) + a ribonucleoside 5'-triphosphate = RNA(n+1) + diphosphate. Functionally, DNA-dependent RNA polymerase catalyzes the transcription of DNA into RNA using the four ribonucleoside triphosphates as substrates. The protein is DNA-directed RNA polymerase subunit beta' of Dinoroseobacter shibae (strain DSM 16493 / NCIMB 14021 / DFL 12).